Reading from the N-terminus, the 290-residue chain is MGANISGGSPEFDRNDDVYSRKLRLVDLPENCVALIMTRLDPPEICRLARLNRMFRRASSADFIWESKLPANYRVIAHKVFDEITLTKLIKKDLYAKLSQPNLFDDGTKELWIDKNTGRLCLSISSKALRITGIDDRRYWSHIPTDESRFQSAAYVQQIWWFEVGGEFEIQFPSGTYSLFFRIQLGKTSKRLGRRICNSEHIHGWDIKPVRFQLATSDNQQAVSLCYLNNNPGSWSHYHVGDFKVTNPDVSTGIKFSMTQIDCTHTKGGLCIDSVLILPKECAKEVIGSQ.

Residues 21–67 enclose the F-box domain; that stretch reads RKLRLVDLPENCVALIMTRLDPPEICRLARLNRMFRRASSADFIWES.

In terms of assembly, part of a SCF (ASK-cullin-F-box) protein ligase complex. Interacts with SKP1A/ASK1, SKP1B/ASK2, ASK5, ASK11 and ASK13.

The protein localises to the nucleus. It functions in the pathway protein modification; protein ubiquitination. Its function is as follows. Component of SCF(ASK-cullin-F-box) E3 ubiquitin ligase complexes, which may mediate the ubiquitination and subsequent proteasomal degradation of target proteins. This Arabidopsis thaliana (Mouse-ear cress) protein is F-box protein PP2-A13 (PP2A13).